The chain runs to 2004 residues: Histone acetyltransferase KAT6A (2004 aa).

The 77-residue stretch at 1-77 folds into the SAMD1-like winged helix (WH) domain; sequence MVKLANPLYT…LNSYKDPDNP (77 aa). The required for activation of RUNX1-1 stretch occupies residues 1-144; it reads MVKLANPLYT…FGGSAASGFH (144 aa). The required for nuclear localization stretch occupies residues 52–166; the sequence is ELSVKDGTIL…HGRLLKDGPL (115 aa). Residues 95–171 enclose the H15 domain; sequence QNVDWNKLIK…KDGPLYRLNT (77 aa). The interval 144–664 is interaction with PML; that stretch reads HQQLRLAIKR…RKGYGRFLID (521 aa). Lys-172 bears the N6-acetyllysine mark. PHD-type zinc fingers lie at residues 206–265 and 259–313; these read IPIC…CKTC and CIEC…CRPR. Residues 312-664 are interaction with RUNX1-1; the sequence is PRKKGRKLLQ…RKGYGRFLID (353 aa). Residues 334–375 are disordered; that stretch reads PIGRPKNRLKKQNTVSKGPFSKVRTGPGRGRKRKITLSSQSA. N6-acetyllysine is present on residues Lys-350 and Lys-355. Thr-369 is modified (phosphothreonine; by PKB/AKT1). Residue Ser-420 is modified to Phosphoserine. Residues 441–464 are disordered; that stretch reads KRGNRKSSTSDWPTDNQDGWDGKQ. A compositionally biased stretch (polar residues) spans 446–457; that stretch reads KSSTSDWPTDNQ. Ser-473 is subject to Phosphoserine. Positions 488–778 are catalytic; it reads IQEQALQKVG…VDPECLRWTP (291 aa). The MYST-type HAT domain occupies 504–778; the sequence is PQVRCPSVIE…VDPECLRWTP (275 aa). Residues 507–810 form a mediates interaction with BRPF1, required for histone H3 acetyltransferase activity region; the sequence is RCPSVIEFGK…EPQCQERELE (304 aa). The C2HC MYST-type zinc-finger motif lies at 537 to 562; the sequence is LYLCEFCLKYMKSRTILQQHMKKCGW. Lys-604 is subject to N6-acetyllysine; by autocatalysis. Residues 645–649 and 654–660 each bind acetyl-CoA; these read SCIMI and QRKGYGR. Glu-680 acts as the Proton donor/acceptor in catalysis. Ser-684 is an acetyl-CoA binding site. Disordered regions lie at residues 785 to 1445, 1461 to 1621, and 1637 to 1721; these read VVSE…AYQD, QADE…MMQQ, and SCVV…MEIP. Phosphoserine is present on residues Ser-787 and Ser-812. Positions 787-803 are enriched in acidic residues; sequence SEEEEEEAEEGENEEPQ. Residue Lys-815 is modified to N6-acetyllysine. Over residues 817–836 the composition is skewed to basic and acidic residues; the sequence is VSHENKEQDSYSVESEKKPE. Residue Lys-834 forms a Glycyl lysine isopeptide (Lys-Gly) (interchain with G-Cter in SUMO2) linkage. A compositionally biased stretch (basic residues) spans 864–873; the sequence is RRGRWGRKNR. Basic and acidic residues predominate over residues 874–888; it reads KTQERFGDKDSKLLL. The residue at position 899 (Tyr-899) is a Phosphotyrosine. Basic and acidic residues-rich tracts occupy residues 931-942 and 953-980; these read GKPDLPKRRLSE and KSPE…DRAV. A phosphoserine mark is found at Ser-941, Ser-954, and Ser-974. Position 1007 is an N6-acetyllysine (Lys-1007). Positions 1009 to 1030 are enriched in basic residues; that stretch reads TLKRKKPFLHRRRRVRKRKHHN. Positions 1031-1042 are enriched in low complexity; sequence SSVVTETISETT. Acidic residues-rich tracts occupy residues 1043-1053 and 1065-1078; these read EVLDEPFEDSD and FEID…DENE. Ser-1089, Ser-1090, and Ser-1113 each carry phosphoserine. A compositionally biased stretch (acidic residues) spans 1107 to 1118; sequence EEEDEESDDADD. Over residues 1146-1172 the composition is skewed to basic residues; sequence LKKKKGWPKGKSRKPIHWKKRPGRKPG. The span at 1203–1223 shows a compositional bias: basic and acidic residues; it reads KIQESEETVEPKEDMPLPEER. A compositionally biased stretch (acidic residues) spans 1224–1245; that stretch reads KEEEEMQAEAEEAEEGEEEDAA. A compositionally biased stretch (low complexity) spans 1246–1262; sequence SSEVPAASPADSSNSPE. The segment covering 1275–1287 has biased composition (basic and acidic residues); the sequence is EKPRVSEEQRQSE. Residues 1288–1305 show a composition bias toward acidic residues; the sequence is EEQQELEEPEPEEEEDAA. Composition is skewed to basic and acidic residues over residues 1323-1345, 1358-1367, and 1398-1420; these read HLES…KEEP, KSREKIKDKE, and EDSH…HSEL. A Glycyl lysine isopeptide (Lys-Gly) (interchain with G-Cter in SUMO2) cross-link involves residue Lys-1342. Low complexity predominate over residues 1481 to 1503; that stretch reads SPISSVQSHPSQSVRSVSSPNVP. The segment covering 1508-1529 has biased composition (polar residues); that stretch reads GYTQISPEQGSLSAPSMQNMET. The interval 1517-1642 is interaction with RUNX1-2; that stretch reads GSLSAPSMQN…KSPQSCVVER (126 aa). Positions 1517–1741 are interaction with PML; it reads GSLSAPSMQN…YERIPGDFGA (225 aa). Positions 1534–1548 are enriched in low complexity; it reads DVPSVSDHSQQVVDS. Over residues 1556 to 1573 the composition is skewed to polar residues; the sequence is IESTTENYENPSSYDSTM. The span at 1574–1621 shows a compositional bias: low complexity; the sequence is GGSICGNSSSQSSCSYGGLSSSSSLTQSSCVVTQQMASMGSSCSMMQQ. A compositionally biased stretch (pro residues) spans 1650–1699; sequence QPPPPPPQQPQPPPPQPQPAPQPPPPQQQPQQQPQPQPQQPPPPPPPQQQ. Polar residues predominate over residues 1702-1712; it reads LSQCSMNNSFT. Residues 1913-1948 are required for activation of RUNX1-2; it reads SMNMNTLNAMNSYRMTQPMMNSSYHSNPAYMNQTAQ.

The protein belongs to the MYST (SAS/MOZ) family. Component of the MOZ/MORF complex composed at least of ING5, KAT6A, KAT6B, MEAF6 and one of BRPF1, BRD1/BRPF2 and BRPF3. Interacts with RUNX1; phosphorylation of RUNX1 enhances the interaction. Interacts with RUNX2. Interacts with p53/TP53. Interacts with PML (isoform PML-4) and this interaction positively regulates its acetylation activity towards p53/TP53. In terms of processing, autoacetylation at Lys-604 is required for proper function. Autoacetylated. Post-translationally, phosphorylation at Thr-369 by PKB/AKT1 inhibits its interaction with PML and negatively regulates its acetylation activity towards p53/TP53.

Its subcellular location is the nucleus. It localises to the nucleolus. The protein resides in the nucleoplasm. It is found in the PML body. The catalysed reaction is L-lysyl-[protein] + acetyl-CoA = N(6)-acetyl-L-lysyl-[protein] + CoA + H(+). Histone acetyltransferase that acetylates lysine residues in histone H3 and histone H4 (in vitro). Component of the MOZ/MORF complex which has a histone H3 acetyltransferase activity. May act as a transcriptional coactivator for RUNX1 and RUNX2. Acetylates p53/TP53 at 'Lys-120' and 'Lys-382' and controls its transcriptional activity via association with PML. The protein is Histone acetyltransferase KAT6A (KAT6A) of Homo sapiens (Human).